Consider the following 367-residue polypeptide: tRNA 2-selenouridine synthase (367 aa).

One can recognise a Rhodanese domain in the interval 15–138 (FLQARPLIDV…LRTFLIQILE (124 aa)). The active-site S-selanylcysteine intermediate is the C98.

Belongs to the SelU family. Monomer.

It catalyses the reaction 5-methylaminomethyl-2-thiouridine(34) in tRNA + selenophosphate + (2E)-geranyl diphosphate + H2O + H(+) = 5-methylaminomethyl-2-selenouridine(34) in tRNA + (2E)-thiogeraniol + phosphate + diphosphate. It carries out the reaction 5-methylaminomethyl-2-thiouridine(34) in tRNA + (2E)-geranyl diphosphate = 5-methylaminomethyl-S-(2E)-geranyl-thiouridine(34) in tRNA + diphosphate. The enzyme catalyses 5-methylaminomethyl-S-(2E)-geranyl-thiouridine(34) in tRNA + selenophosphate + H(+) = 5-methylaminomethyl-2-(Se-phospho)selenouridine(34) in tRNA + (2E)-thiogeraniol. The catalysed reaction is 5-methylaminomethyl-2-(Se-phospho)selenouridine(34) in tRNA + H2O = 5-methylaminomethyl-2-selenouridine(34) in tRNA + phosphate. Functionally, involved in the post-transcriptional modification of the uridine at the wobble position (U34) of tRNA(Lys), tRNA(Glu) and tRNA(Gln). Catalyzes the conversion of 2-thiouridine (S2U-RNA) to 2-selenouridine (Se2U-RNA). Acts in a two-step process involving geranylation of 2-thiouridine (S2U) to S-geranyl-2-thiouridine (geS2U) and subsequent selenation of the latter derivative to 2-selenouridine (Se2U) in the tRNA chain. This Shewanella denitrificans (strain OS217 / ATCC BAA-1090 / DSM 15013) protein is tRNA 2-selenouridine synthase.